The sequence spans 163 residues: UPF0763 protein CJJ81176_1011 (163 aa).

Belongs to the UPF0763 family.

The polypeptide is UPF0763 protein CJJ81176_1011 (Campylobacter jejuni subsp. jejuni serotype O:23/36 (strain 81-176)).